Here is a 116-residue protein sequence, read N- to C-terminus: Holo-[acyl-carrier-protein] synthase (116 aa).

Asp5 and Glu50 together coordinate Mg(2+).

The protein belongs to the P-Pant transferase superfamily. AcpS family. Mg(2+) is required as a cofactor.

It localises to the cytoplasm. The catalysed reaction is apo-[ACP] + CoA = holo-[ACP] + adenosine 3',5'-bisphosphate + H(+). Transfers the 4'-phosphopantetheine moiety from coenzyme A to a Ser of acyl-carrier-protein. The protein is Holo-[acyl-carrier-protein] synthase of Campylobacter lari (strain RM2100 / D67 / ATCC BAA-1060).